We begin with the raw amino-acid sequence, 145 residues long: Copper transporter 4 (145 aa).

The next 2 membrane-spanning stretches (helical) occupy residues 53 to 73 (GMYALALIFVFFLAFLAEWLA) and 106 to 126 (YLVILAVVSFNGGVFLAAIFG).

This sequence belongs to the copper transporter (Ctr) (TC 1.A.56) family. SLC31A subfamily. In terms of tissue distribution, highly expressed in roots and at lower levels in leaves, stems and flowers.

It localises to the membrane. Its function is as follows. Involved in the transport of copper. In Arabidopsis thaliana (Mouse-ear cress), this protein is Copper transporter 4 (COPT4).